The sequence spans 427 residues: Transcription termination factor Rho (427 aa).

Residues 51 to 125 (LLFMEGVLEI…LHVEAVNGDD (75 aa)) enclose the Rho RNA-BD domain. Residues 168 to 173 (GFGQRG), 180 to 185 (KAGKTM), and Arg-211 each bind ATP.

The protein belongs to the Rho family. Homohexamer. The homohexamer assembles into an open ring structure.

In terms of biological role, facilitates transcription termination by a mechanism that involves Rho binding to the nascent RNA, activation of Rho's RNA-dependent ATPase activity, and release of the mRNA from the DNA template. This Bacillus subtilis (strain 168) protein is Transcription termination factor Rho.